Consider the following 1898-residue polypeptide: Receptor-type tyrosine-protein phosphatase F (1898 aa).

An N-terminal signal peptide occupies residues 1 to 29 (MAPEPAPGRRMVPLVPALVMLGLMAGAHG). At 30–1254 (DSKPVFVKVP…QQQEEPEMLW (1225 aa)) the chain is on the extracellular side. Ig-like C2-type domains follow at residues 33 to 123 (PVFV…AKLS), 135 to 224 (PTID…ANLY), and 232 to 314 (PRFS…AQVT). Cysteines 54 and 107 form a disulfide. Heparin is bound at residue 68–77 (KKGKKVSSQR). A glycan (N-linked (GlcNAc...) asparagine) is linked at Asn117. Cys156 and Cys207 are joined by a disulfide. 2 N-linked (GlcNAc...) asparagine glycosylation sites follow: Asn250 and Asn295. Residues Cys253 and Cys298 are joined by a disulfide bond. 8 consecutive Fibronectin type-III domains span residues 321–411 (PPID…TGEQ), 416–510 (PPRR…TQQG), 514–604 (QPAD…TAQS), 609–706 (PPQK…TDED), 711–810 (PPRK…TTGA), 811–905 (VPGR…PEDA), 909–1001 (FPQN…TMPM), and 1005–1089 (FAKN…TAPD). Residues 693 to 713 (GPESSPVLVRTDEDVPSGPPR) are disordered. Asn721 carries N-linked (GlcNAc...) asparagine glycosylation. N-linked (GlcNAc...) asparagine glycosylation is found at Asn941 and Asn957. Residues 1255-1275 (VTGPVLAVILIILIVIAILLF) traverse the membrane as a helical segment. Residues 1276–1898 (KRKRTHSPSS…YLGSFDHYAT (623 aa)) lie on the Cytoplasmic side of the membrane. Ser1296 carries the post-translational modification Phosphoserine. 2 Tyrosine-protein phosphatase domains span residues 1343-1598 (FSQE…LLEA) and 1630-1889 (MELE…ALEY). Substrate-binding positions include Asp1507, 1539-1545 (CSAGVGR), and Gln1583. The Phosphocysteine intermediate role is filled by Cys1539. Cys1830 (phosphocysteine intermediate) is an active-site residue.

Belongs to the protein-tyrosine phosphatase family. Receptor class 2A subfamily. In terms of assembly, interacts with GRIP1. Interacts with PPFIA1, PPFIA2 and PPFIA3. Interacts with PTPRF.

Its subcellular location is the membrane. The enzyme catalyses O-phospho-L-tyrosyl-[protein] + H2O = L-tyrosyl-[protein] + phosphate. Functionally, possible cell adhesion receptor. It possesses an intrinsic protein tyrosine phosphatase activity (PTPase) and dephosphorylates EPHA2 regulating its activity. In terms of biological role, the first PTPase domain has enzymatic activity, while the second one seems to affect the substrate specificity of the first one. The sequence is that of Receptor-type tyrosine-protein phosphatase F (Ptprf) from Rattus norvegicus (Rat).